Here is a 117-residue protein sequence, read N- to C-terminus: Large ribosomal subunit protein bL19 (117 aa).

Belongs to the bacterial ribosomal protein bL19 family.

Functionally, this protein is located at the 30S-50S ribosomal subunit interface and may play a role in the structure and function of the aminoacyl-tRNA binding site. The chain is Large ribosomal subunit protein bL19 from Micrococcus luteus (strain ATCC 4698 / DSM 20030 / JCM 1464 / CCM 169 / CCUG 5858 / IAM 1056 / NBRC 3333 / NCIMB 9278 / NCTC 2665 / VKM Ac-2230) (Micrococcus lysodeikticus).